The chain runs to 307 residues: HPr kinase/phosphorylase (307 aa).

Catalysis depends on residues histidine 136 and lysine 157. 151 to 158 (GESGIGKS) contributes to the ATP binding site. Mg(2+) is bound at residue serine 158. Aspartate 175 acts as the Proton acceptor; for phosphorylation activity. Proton donor; for dephosphorylation activity in catalysis. An important for the catalytic mechanism of both phosphorylation and dephosphorylation region spans residues 198–207 (LEVRGMGIID). Glutamate 199 serves as a coordination point for Mg(2+). Residue arginine 240 is part of the active site. The interval 261–266 (PIRPGR) is important for the catalytic mechanism of dephosphorylation.

The protein belongs to the HPrK/P family. In terms of assembly, homohexamer. Requires Mg(2+) as cofactor.

The enzyme catalyses [HPr protein]-L-serine + ATP = [HPr protein]-O-phospho-L-serine + ADP + H(+). It carries out the reaction [HPr protein]-O-phospho-L-serine + phosphate + H(+) = [HPr protein]-L-serine + diphosphate. Functionally, catalyzes the ATP- as well as the pyrophosphate-dependent phosphorylation of a specific serine residue in HPr, a phosphocarrier protein of the phosphoenolpyruvate-dependent sugar phosphotransferase system (PTS). HprK/P also catalyzes the pyrophosphate-producing, inorganic phosphate-dependent dephosphorylation (phosphorolysis) of seryl-phosphorylated HPr (P-Ser-HPr). The two antagonistic activities of HprK/P are regulated by several intracellular metabolites, which change their concentration in response to the absence or presence of rapidly metabolisable carbon sources (glucose, fructose, etc.) in the growth medium. Therefore, by controlling the phosphorylation state of HPr, HPrK/P is a sensor enzyme that plays a major role in the regulation of carbon metabolism and sugar transport: it mediates carbon catabolite repression (CCR), and regulates PTS-catalyzed carbohydrate uptake and inducer exclusion. This chain is HPr kinase/phosphorylase, found in Clostridium perfringens (strain 13 / Type A).